Consider the following 265-residue polypeptide: 14-3-3-like protein GF14-D (265 aa).

The disordered stretch occupies residues 244–265 (DANDDGGDEIKEAAAPKEPGDQ). The span at 251–265 (DEIKEAAAPKEPGDQ) shows a compositional bias: basic and acidic residues.

Belongs to the 14-3-3 family. Interacts with BZR1. Interacts with ABI5.

Functionally, is associated with a DNA binding complex that binds to the G box, a well-characterized cis-acting DNA regulatory element found in plant genes. This chain is 14-3-3-like protein GF14-D (GF14D), found in Oryza sativa subsp. japonica (Rice).